The chain runs to 204 residues: Small ribosomal subunit protein uS4 (204 aa).

Residues 1 to 49 (MSKRKSAKYKLDRRMGENIWGRPNSPVNKRSYGPGQHGQRRKGKTSDFG) are disordered. One can recognise an S4 RNA-binding domain in the interval 94-154 (QRLDMVVYRA…NKAKEMALVI (61 aa)).

This sequence belongs to the universal ribosomal protein uS4 family. In terms of assembly, part of the 30S ribosomal subunit. Contacts protein S5. The interaction surface between S4 and S5 is involved in control of translational fidelity.

One of the primary rRNA binding proteins, it binds directly to 16S rRNA where it nucleates assembly of the body of the 30S subunit. In terms of biological role, with S5 and S12 plays an important role in translational accuracy. The chain is Small ribosomal subunit protein uS4 from Erythrobacter litoralis (strain HTCC2594).